We begin with the raw amino-acid sequence, 767 residues long: MATYLEFIQQNEERDGVRFSWNVWPSSRLEATRMVVPLACLLTPLRERPDLPPVQYEPVLCSRPTCKAVLNPLCQVDYRAKLWACNFCFQRNQFPPAYAGISEVNQPAELMPQFSTIEYIVQRGPQTPLIFLYVVDTCLEEEDLQALKESLQMSLSLLPADALVGLITFGRMIQVHELSCEGISKSYVFRGTKDLTAKQIQDMLGLSRPAVPIQQGRPLQAPEQPVISSRFLQPVHKIDMNLTDLLGELQRDPWPVTQGKRPLRSTGVALSIAVGLLEGTFPNTGARIMLFTGGPPTQGPGMVVGDELKTPIRSWHDIEKDNARFMKKATKHYETLANRTATNGHCIDIYACALDQTGLLEMKCCANLTGGHMVMGDSFNTSLFKQTFQRVFNKGLNGEFRMAFGANLEVKTSRELKIAGAIGPCVSLNVKGPCVSENELGIGGTSQWKICGLDPCTTLAIYFEVVNQHNAPIPQGGRGAVQFVTQYQHSSTQKRIRVTTIARNWADAQSQLQHIEAAFDQEAAAVLMARLGVYRAESEEGPDVLRWLDRQLIRLCQKFGQYNKDDPNSFRLSESFSLYPQFMFHLRRSPFLQVFNNSPDESSYYRHHFARQDLTQSLIMIQPILYAYSFHGPPEPVLLDSSSILPDRILLMDTFFQIVIYLGETIAQWQKAGYQDMPEYENFKHLLQAPLDDAQEILQTRFPMPRYVHTEHGGSQARFLLSKVNPSQTHNNLYAWGQESGAPILTDDVSLQVFMDHLKKLAVSSAA.

The Zn(2+) site is built by cysteine 61, cysteine 66, cysteine 85, and cysteine 88. Residues 634 to 720 (PEPVLLDSSS…EHGGSQARFL (87 aa)) form a Gelsolin-like repeat.

This sequence belongs to the SEC23/SEC24 family. SEC23 subfamily. COPII is composed of at least five proteins: the Sec23/24 complex, the Sec13/31 complex and Sar1.

The protein resides in the cytoplasmic vesicle. The protein localises to the COPII-coated vesicle membrane. It is found in the endoplasmic reticulum membrane. It localises to the cytoplasm. Its subcellular location is the cytosol. Functionally, component of the coat protein complex II (COPII) which promotes the formation of transport vesicles from the endoplasmic reticulum (ER). The coat has two main functions, the physical deformation of the endoplasmic reticulum membrane into vesicles and the selection of cargo molecules for their transport to the Golgi complex. The protein is Protein transport protein Sec23A of Gallus gallus (Chicken).